We begin with the raw amino-acid sequence, 592 residues long: Aspartate--tRNA(Asp/Asn) ligase (592 aa).

Residue glutamate 177 participates in L-aspartate binding. Positions 201–204 (QIFK) are aspartate. Positions 223 and 452 each coordinate L-aspartate. Residue 223–225 (RDE) participates in ATP binding. An ATP-binding site is contributed by glutamate 486. Arginine 493 is an L-aspartate binding site. 538 to 541 (GIDR) provides a ligand contact to ATP.

The protein belongs to the class-II aminoacyl-tRNA synthetase family. Type 1 subfamily. As to quaternary structure, homodimer.

Its subcellular location is the cytoplasm. It carries out the reaction tRNA(Asx) + L-aspartate + ATP = L-aspartyl-tRNA(Asx) + AMP + diphosphate. In terms of biological role, aspartyl-tRNA synthetase with relaxed tRNA specificity since it is able to aspartylate not only its cognate tRNA(Asp) but also tRNA(Asn). Reaction proceeds in two steps: L-aspartate is first activated by ATP to form Asp-AMP and then transferred to the acceptor end of tRNA(Asp/Asn). The sequence is that of Aspartate--tRNA(Asp/Asn) ligase from Anaplasma marginale (strain Florida).